The chain runs to 794 residues: LPS-assembly protein LptD (794 aa).

The first 31 residues, 1–31 (MPSHCSSLLCARFRLSSLAVIVALAASGVRA), serve as a signal peptide directing secretion.

It belongs to the LptD family. In terms of assembly, component of the lipopolysaccharide transport and assembly complex. Interacts with LptE and LptA.

It is found in the cell outer membrane. Functionally, together with LptE, is involved in the assembly of lipopolysaccharide (LPS) at the surface of the outer membrane. The polypeptide is LPS-assembly protein LptD (Marinobacter nauticus (strain ATCC 700491 / DSM 11845 / VT8) (Marinobacter aquaeolei)).